Consider the following 144-residue polypeptide: Subtilase-type protease inhibitor (144 aa).

Positions 1–35 are cleaved as a signal peptide; the sequence is MRNTARWAATLGLTATAVCGPLAGASLASPATAPA. 2 disulfides stabilise this stretch: Cys66–Cys81 and Cys102–Cys132.

It belongs to the protease inhibitor I16 (SSI) family. Homodimer.

The protein localises to the secreted. In terms of biological role, strong inhibitory activity toward subtilisin BPN' and, to a lesser extent, toward trypsin. The polypeptide is Subtilase-type protease inhibitor (sti1) (Streptomyces coelicolor (strain ATCC BAA-471 / A3(2) / M145)).